A 209-amino-acid polypeptide reads, in one-letter code: Uracil phosphoribosyltransferase (209 aa).

Residues Arg-79, Arg-104, and Asp-131–Ser-139 each bind 5-phospho-alpha-D-ribose 1-diphosphate. Residues Val-194 and Gly-199–Ala-201 contribute to the uracil site. Asp-200 contributes to the 5-phospho-alpha-D-ribose 1-diphosphate binding site.

It belongs to the UPRTase family. Mg(2+) serves as cofactor.

It carries out the reaction UMP + diphosphate = 5-phospho-alpha-D-ribose 1-diphosphate + uracil. The protein operates within pyrimidine metabolism; UMP biosynthesis via salvage pathway; UMP from uracil: step 1/1. Its activity is regulated as follows. Allosterically activated by GTP. Functionally, catalyzes the conversion of uracil and 5-phospho-alpha-D-ribose 1-diphosphate (PRPP) to UMP and diphosphate. The polypeptide is Uracil phosphoribosyltransferase (Bacillus cytotoxicus (strain DSM 22905 / CIP 110041 / 391-98 / NVH 391-98)).